The chain runs to 426 residues: Enolase (426 aa).

Q165 is a binding site for (2R)-2-phosphoglycerate. E209 functions as the Proton donor in the catalytic mechanism. Residues D244, E287, and D313 each coordinate Mg(2+). 4 residues coordinate (2R)-2-phosphoglycerate: K338, R367, S368, and K389. The active-site Proton acceptor is K338.

The protein belongs to the enolase family. Requires Mg(2+) as cofactor.

The protein localises to the cytoplasm. It is found in the secreted. The protein resides in the cell surface. It carries out the reaction (2R)-2-phosphoglycerate = phosphoenolpyruvate + H2O. The protein operates within carbohydrate degradation; glycolysis; pyruvate from D-glyceraldehyde 3-phosphate: step 4/5. Functionally, catalyzes the reversible conversion of 2-phosphoglycerate (2-PG) into phosphoenolpyruvate (PEP). It is essential for the degradation of carbohydrates via glycolysis. The chain is Enolase from Methanococcus maripaludis (strain DSM 14266 / JCM 13030 / NBRC 101832 / S2 / LL).